We begin with the raw amino-acid sequence, 408 residues long: BRCA1-A complex subunit Abraxas 1 (408 aa).

One can recognise an MPN domain in the interval 7-155 (TAVISGFVFG…KSTHRLEYAL (149 aa)). A coiled-coil region spans residues 210-272 (ALAEVNRISD…MEEKGNKVSE (63 aa)). Residues 335–408 (HRRQAGKRKA…EVSRSKSPTF (74 aa)) are disordered. The span at 337-358 (RQAGKRKAHSKQLGKTSTKKSR) shows a compositional bias: basic residues. Residues 394 to 408 (QSLNVEVSRSKSPTF) are compositionally biased toward polar residues. Ser405 is subject to Phosphoserine. The pSXXF motif signature appears at 405–408 (SPTF).

The protein belongs to the FAM175 family. Abraxas subfamily. Component of the BRCA1-A complex. Component of the BRISC complex. Homodimer. Interacts directly (when phosphorylated at Ser-405) with brca1. The phosphorylated homodimer can interact directly with two brca1 chains, giving rise to a heterotetramer. In terms of processing, phosphorylation of Ser-405 of the pSXXF motif by ATM or ATR constitutes a specific recognition motif for the BRCT domain of BRCA1.

Its subcellular location is the nucleus. Its function is as follows. Involved in DNA damage response and double-strand break (DSB) repair. Component of the BRCA1-A complex, acting as a central scaffold protein that assembles the various components of the complex and mediates the recruitment of brca1. The BRCA1-A complex specifically recognizes 'Lys-63'-linked ubiquitinated histones H2A and H2AX at DNA lesion sites, leading to target the brca1-bard1 heterodimer to sites of DNA damage at DSBs. This complex also possesses deubiquitinase activity that specifically removes 'Lys-63'-linked ubiquitin on histones H2A and H2AX. In Xenopus laevis (African clawed frog), this protein is BRCA1-A complex subunit Abraxas 1.